The primary structure comprises 413 residues: Enhanced ethylene response protein 5 (413 aa).

The region spanning 216–402 (VTYMYYTGRL…KVVVLSKQDP (187 aa)) is the PCI domain.

Interacts with EIN2 (via C-terminus). May also interact weakly with CSN8. Interacts with DSS1(V), AMPD, SAC3A, SAC3B and At5g61290 (AC Q9FLK4). Interacts with UCH1 and UCH2. Interacts with NUP1, anchoring the TREX-2 complex on the nuclear pore complex. As to expression, expressed at low levels in roots, leaves, stems and shoots. Detected in seedlings, roots, leaves and anthers.

It localises to the nucleus. Its function is as follows. Involved in the regulation of ethylene response. Probable TREX-2 component required for nuclear RNA export. The TREX-2 complex (transcription and export complex 2) functions in docking export-competent ribonucleoprotein particles (mRNPs) to the nuclear entrance of the nuclear pore complex (nuclear basket). TREX-2 participates in mRNA export and accurate chromatin positioning in the nucleus by tethering genes to the nuclear periphery. The protein is Enhanced ethylene response protein 5 of Arabidopsis thaliana (Mouse-ear cress).